A 242-amino-acid chain; its full sequence is Trypsin-1 (242 aa).

A signal peptide spans 1-15 (MISLVFVLLIGAAFA). Residues 16–20 (TEDDK) constitute a propeptide, activation peptide. The region spanning 21 to 240 (IVGGYECKAY…FNDWLTSTMA (220 aa)) is the Peptidase S1 domain. 6 disulfide bridges follow: C27/C156, C45/C61, C129/C229, C136/C202, C167/C181, and C192/C216. The active-site Charge relay system is the H60. Residues E72, N74, V77, and E82 each contribute to the Ca(2+) site. The Charge relay system role is filled by D104. S196 serves as the catalytic Charge relay system.

The protein belongs to the peptidase S1 family. It depends on Ca(2+) as a cofactor.

It is found in the secreted. It localises to the extracellular space. The enzyme catalyses Preferential cleavage: Arg-|-Xaa, Lys-|-Xaa.. In Salmo salar (Atlantic salmon), this protein is Trypsin-1.